We begin with the raw amino-acid sequence, 259 residues long: 2-oxoglutaramate amidase (259 aa).

The CN hydrolase domain maps to tryptophan 3–leucine 238. Catalysis depends on glutamate 42, which acts as the Proton acceptor. Residue lysine 111 is the Proton donor of the active site. Cysteine 145 (nucleophile) is an active-site residue.

It belongs to the carbon-nitrogen hydrolase superfamily. NIT1/NIT2 family.

The catalysed reaction is 2-oxoglutaramate + H2O = 2-oxoglutarate + NH4(+). Functionally, involved in the methylthioribose (MTR) recycling pathway. Probably catalyzes the conversion of 2-oxoglutaramate to 2-oxoglutarate. The chain is 2-oxoglutaramate amidase from Bacillus subtilis (strain 168).